Consider the following 1147-residue polypeptide: ATP-dependent helicase/deoxyribonuclease subunit B (1147 aa).

8–15 (GGSGAGKS) contributes to the ATP binding site. [4Fe-4S] cluster-binding residues include Cys-780, Cys-1092, Cys-1095, and Cys-1101.

Belongs to the helicase family. AddB/RexB type 1 subfamily. Heterodimer of AddA and AddB. The cofactor is Mg(2+). [4Fe-4S] cluster is required as a cofactor.

In terms of biological role, the heterodimer acts as both an ATP-dependent DNA helicase and an ATP-dependent, dual-direction single-stranded exonuclease. Recognizes the chi site generating a DNA molecule suitable for the initiation of homologous recombination. The AddB subunit has 5' -&gt; 3' nuclease activity but not helicase activity. This is ATP-dependent helicase/deoxyribonuclease subunit B from Lachnoclostridium phytofermentans (strain ATCC 700394 / DSM 18823 / ISDg) (Clostridium phytofermentans).